We begin with the raw amino-acid sequence, 819 residues long: LPS-assembly protein LptD (819 aa).

The N-terminal stretch at 1–33 is a signal peptide; sequence MRQMKYQFKFNPLAAAIFTLLCGGSMQSSYADA.

It belongs to the LptD family. Component of the lipopolysaccharide transport and assembly complex. Interacts with LptE and LptA.

The protein resides in the cell outer membrane. Functionally, together with LptE, is involved in the assembly of lipopolysaccharide (LPS) at the surface of the outer membrane. The polypeptide is LPS-assembly protein LptD (Acinetobacter baylyi (strain ATCC 33305 / BD413 / ADP1)).